We begin with the raw amino-acid sequence, 104 residues long: Circadian clock oscillator protein KaiB (104 aa).

It belongs to the KaiB family. In terms of assembly, the KaiABC complex composition changes during the circadian cycle to control KaiC phosphorylation. Complexes KaiC(6), KaiA(2-4):KaiC(6), KaiB(6):KaiC(6) and KaiC(6):KaiB(6):KaiA(12) are among the most important forms, many form cooperatively. Undergoes a major conformational rearrangment; in the free state forms homotetramers as a dimer of dimers. When bound to the CI domain of KaiC switches to a monomeric thioredoxin-fold (KaiB(fs)). KaiB(fs) binds CikA, leading it to dephosphorylate phospho-RpaA.

Its function is as follows. Key component of the KaiABC oscillator complex, which constitutes the main circadian regulator in cyanobacteria. Complex composition changes during the circadian cycle to control KaiC phosphorylation. KaiA stimulates KaiC autophosphorylation, while KaiB sequesters KaiA, leading to KaiC autodephosphorylation. Phospho-Ser-431 KaiC accumulation triggers binding of KaiB to form the KaiB(6):KaiC(6) complex, leading to changes in output regulators CikA and SasA. KaiB switches to a thioredoxin-like fold (KaiB(fs)) when bound to KaiC. KaiB(6):KaiC(6) formation exposes a site for KaiA binding that sequesters KaiA from KaiC, making the KaiC(6):KaiB(6):KaiA(12) complex that results in KaiC autodephosphorylation. In terms of biological role, a metamorphic protein which reversibly switches between an inactive tetrameric fold and a rare, thioredoxin-like monomeric fold (KaiB(fs)). KaiB(fs) binds phospho-KaiC, KaiA and CikA. KaiA and CikA compete for binding to KaiB(fs), and KaiB(fs) and SasA compete for binding to KaiC, thus the clock oscillator and output signal pathway are tightly coupled. This chain is Circadian clock oscillator protein KaiB, found in Nostoc punctiforme (strain ATCC 29133 / PCC 73102).